A 257-amino-acid polypeptide reads, in one-letter code: Imidazole glycerol phosphate synthase subunit HisF (257 aa).

Active-site residues include aspartate 11 and aspartate 130.

Belongs to the HisA/HisF family. As to quaternary structure, heterodimer of HisH and HisF.

Its subcellular location is the cytoplasm. It carries out the reaction 5-[(5-phospho-1-deoxy-D-ribulos-1-ylimino)methylamino]-1-(5-phospho-beta-D-ribosyl)imidazole-4-carboxamide + L-glutamine = D-erythro-1-(imidazol-4-yl)glycerol 3-phosphate + 5-amino-1-(5-phospho-beta-D-ribosyl)imidazole-4-carboxamide + L-glutamate + H(+). It functions in the pathway amino-acid biosynthesis; L-histidine biosynthesis; L-histidine from 5-phospho-alpha-D-ribose 1-diphosphate: step 5/9. IGPS catalyzes the conversion of PRFAR and glutamine to IGP, AICAR and glutamate. The HisF subunit catalyzes the cyclization activity that produces IGP and AICAR from PRFAR using the ammonia provided by the HisH subunit. The sequence is that of Imidazole glycerol phosphate synthase subunit HisF from Bradyrhizobium diazoefficiens (strain JCM 10833 / BCRC 13528 / IAM 13628 / NBRC 14792 / USDA 110).